Reading from the N-terminus, the 155-residue chain is MSRRGTAEEKTAKSDPIYRNRLVNMLVNRILKHGKKSLAYQIIYRAVKKIQQKTETNPLSVLRQAIHGVTPGIAVKARRVGGSTHQVPIEIGSTQGKALAIRWLLAASRKRPGRNMAFKLSSELVDAAKGSGDAIRKREETHRMAEANRAFAHFR.

It belongs to the universal ribosomal protein uS7 family. As to quaternary structure, part of the 30S ribosomal subunit.

It is found in the plastid. The protein localises to the chloroplast. Functionally, one of the primary rRNA binding proteins, it binds directly to 16S rRNA where it nucleates assembly of the head domain of the 30S subunit. In Guizotia abyssinica (Niger), this protein is Small ribosomal subunit protein uS7cz/uS7cy (rps7-A).